The primary structure comprises 198 residues: Probable GTP-binding protein EngB (198 aa).

An EngB-type G domain is found at 27-198 (DLPEVALAGR…ESWDTILSEL (172 aa)). GTP is bound by residues 35 to 42 (GRSNVGKS), 62 to 66 (GKTQL), 80 to 83 (DVPG), 147 to 150 (TKAD), and 179 to 181 (FSS). Residues serine 42 and threonine 64 each coordinate Mg(2+).

It belongs to the TRAFAC class TrmE-Era-EngA-EngB-Septin-like GTPase superfamily. EngB GTPase family. The cofactor is Mg(2+).

In terms of biological role, necessary for normal cell division and for the maintenance of normal septation. This Streptococcus agalactiae serotype III (strain NEM316) protein is Probable GTP-binding protein EngB.